Consider the following 197-residue polypeptide: Adrenodoxin-like protein 1, mitochondrial (197 aa).

Residues 1-35 constitute a mitochondrion transit peptide; it reads MIGHRISRLGSTIVKQLAREGYLATYGTKNLHRSY. One can recognise a 2Fe-2S ferredoxin-type domain in the interval 79 to 184; sequence EKITIIFVDK…GVRLAIPSAT (106 aa). The [2Fe-2S] cluster site is built by C118, C124, C127, and C165.

This sequence belongs to the adrenodoxin/putidaredoxin family. It depends on [2Fe-2S] cluster as a cofactor.

The protein resides in the mitochondrion matrix. Associates in vitro with the adrenodoxin reductase MFDR to form an efficient low potential electron transfer chain that is able to reduce cytochrome C. Functions as accessory mitochondrial protein involved with BIO2 in the plant biotin synthase reaction. This chain is Adrenodoxin-like protein 1, mitochondrial, found in Arabidopsis thaliana (Mouse-ear cress).